The chain runs to 398 residues: Phosphoglycerate kinase (398 aa).

Residues 23-25 (DLN), R38, 61-64 (HFGR), R120, and R153 each bind substrate. ATP contacts are provided by residues K203, E325, and 355–358 (GGDT).

It belongs to the phosphoglycerate kinase family. In terms of assembly, monomer.

The protein resides in the cytoplasm. The catalysed reaction is (2R)-3-phosphoglycerate + ATP = (2R)-3-phospho-glyceroyl phosphate + ADP. It participates in carbohydrate degradation; glycolysis; pyruvate from D-glyceraldehyde 3-phosphate: step 2/5. The protein is Phosphoglycerate kinase of Sphingopyxis alaskensis (strain DSM 13593 / LMG 18877 / RB2256) (Sphingomonas alaskensis).